Here is a 109-residue protein sequence, read N- to C-terminus: Parvalbumin beta (109 aa).

A2 carries the post-translational modification N-acetylalanine. EF-hand domains are found at residues 39-74 (KSAD…FKAG) and 78-109 (LSDA…MIKG). Ca(2+) contacts are provided by D52, D54, S56, Y58, E60, E63, D91, D93, D95, K97, and E102.

It belongs to the parvalbumin family. The N-terminus is blocked.

In terms of biological role, in muscle, parvalbumin is thought to be involved in relaxation after contraction. It binds two calcium ions. This is Parvalbumin beta from Scomber scombrus (Atlantic mackerel).